The primary structure comprises 245 residues: DNA polymerase sliding clamp (245 aa).

This sequence belongs to the PCNA family. As to quaternary structure, homotrimer. The subunits circularize to form a toroid; DNA passes through its center. Replication factor C (RFC) is required to load the toroid on the DNA.

In terms of biological role, sliding clamp subunit that acts as a moving platform for DNA processing. Responsible for tethering the catalytic subunit of DNA polymerase and other proteins to DNA during high-speed replication. This Picrophilus torridus (strain ATCC 700027 / DSM 9790 / JCM 10055 / NBRC 100828 / KAW 2/3) protein is DNA polymerase sliding clamp.